The primary structure comprises 204 residues: Large ribosomal subunit protein eL15 (204 aa).

Belongs to the eukaryotic ribosomal protein eL15 family.

This chain is Large ribosomal subunit protein eL15 (RpL15), found in Anopheles gambiae (African malaria mosquito).